Here is a 484-residue protein sequence, read N- to C-terminus: UDP-N-acetylmuramoyl-L-alanyl-D-glutamate--2,6-diaminopimelate ligase (484 aa).

110–116 is an ATP binding site; sequence GTNGKTT. UDP-N-acetyl-alpha-D-muramoyl-L-alanyl-D-glutamate is bound by residues 152–153, S179, and R187; that span reads TT. Position 219 is an N6-carboxylysine (K219). Meso-2,6-diaminopimelate is bound by residues R381, 405–408, G455, and E459; that span reads DNPR. Residues 405–408 carry the Meso-diaminopimelate recognition motif motif; sequence DNPR.

The protein belongs to the MurCDEF family. MurE subfamily. Mg(2+) serves as cofactor. In terms of processing, carboxylation is probably crucial for Mg(2+) binding and, consequently, for the gamma-phosphate positioning of ATP.

The protein resides in the cytoplasm. The enzyme catalyses UDP-N-acetyl-alpha-D-muramoyl-L-alanyl-D-glutamate + meso-2,6-diaminopimelate + ATP = UDP-N-acetyl-alpha-D-muramoyl-L-alanyl-gamma-D-glutamyl-meso-2,6-diaminopimelate + ADP + phosphate + H(+). It participates in cell wall biogenesis; peptidoglycan biosynthesis. In terms of biological role, catalyzes the addition of meso-diaminopimelic acid to the nucleotide precursor UDP-N-acetylmuramoyl-L-alanyl-D-glutamate (UMAG) in the biosynthesis of bacterial cell-wall peptidoglycan. The chain is UDP-N-acetylmuramoyl-L-alanyl-D-glutamate--2,6-diaminopimelate ligase from Clostridium perfringens (strain 13 / Type A).